Here is a 796-residue protein sequence, read N- to C-terminus: Bud site selection protein 27 (796 aa).

Residues 81–121 (KEEAITFVDDKLKLMEDAIEQFNLKIEEAKKTLDNLNHMED) are a coiled coil. Polar residues predominate over residues 152–168 (VISSSVTPTTKQPSQSN). Disordered stretches follow at residues 152 to 197 (VISS…EENL), 300 to 344 (LRAQ…QVGF), 421 to 458 (EGEA…TTRS), 535 to 624 (EKEP…AKTG), and 752 to 796 (ATAS…DSKP). 2 stretches are compositionally biased toward basic and acidic residues: residues 169–197 (SKKE…EENL) and 306–318 (SQDH…DVNK). Basic residues predominate over residues 427-441 (SNRRTRVSRFRKDRA). Residues 535-550 (EKEPEINSKSEFETPF) are compositionally biased toward basic and acidic residues. Residues 551 to 568 (KKKKLKSLQKPRSSKSMK) show a composition bias toward basic residues. The segment covering 579–589 (ISDDDYDDDDD) has biased composition (acidic residues). Position 580 is a phosphoserine (Ser-580). The span at 601-610 (NNTDEQDKFP) shows a compositional bias: basic and acidic residues.

It belongs to the prefoldin subunit alpha family.

Its subcellular location is the cytoplasm. In terms of biological role, involved in gene expression controlled by TOR kinase and nutrient signaling. May also be involved in positioning the proximal bud pole signal. The polypeptide is Bud site selection protein 27 (BUD27) (Saccharomyces cerevisiae (strain ATCC 204508 / S288c) (Baker's yeast)).